A 78-amino-acid polypeptide reads, in one-letter code: Mambalgin-1 (78 aa).

Residues 1–21 (MKTLLLTLLVVTIVCLDLGYS) form the signal peptide. 4 disulfides stabilise this stretch: Cys24-Cys40, Cys33-Cys58, Cys62-Cys70, and Cys71-Cys76.

Belongs to the three-finger toxin family. Short-chain subfamily. Mambalgin sub-subfamily. In terms of tissue distribution, expressed by the venom gland.

It localises to the secreted. In terms of biological role, this three-finger toxin inhibits ASIC channels. It acts as a gating modifier toxin by decreasing the apparent proton sensitivity of activation and by slightly increasing the apparent proton sensitivity for inactivation. It binds more tightly to the closed state and to a much lesser extent the inactivated/desensitized state of ASIC1a isoform of ASIC1. It interacts directly with the outside surface of the thumb domain of chicken ASIC1a (ASIC1a), but does not insert into the acidic pocket as suggested for mambalgin-2. This binding leads to relocation of the thumb domain that could disrupt the acidic pocket of cASIC1a. It reversibly inhibits rat ASIC1a (IC(50)=3.4-55 nM), rat ASIC1a-ASIC2b (IC(50)=61 nM), rat ASIC1a-ASIC1b (IC(50)=72 nM), human ASIC1a (IC(50)=127-580 nM), chicken ASIC1a (IC(50)=123.6 nM), rat ASIC1b (IC(50)=22.2-203 nM), rat ASIC1a-ASIC2a (IC(50)=152-252 nM). In vivo, it shows a potent naloxone-resistant analgesic effect against acute and inflammatory pain upon central and peripheral injection. In addition, it also has an opioid-independent effect on both thermal and mechanical inflammatory pain after systemic administration and is effective against neuropathic pain. The sequence is that of Mambalgin-1 from Dendroaspis polylepis polylepis (Black mamba).